A 575-amino-acid chain; its full sequence is Delta-selinene-like synthase, chloroplastic (575 aa).

(2E,6E)-farnesyl diphosphate contacts are provided by arginine 288, aspartate 325, aspartate 329, arginine 466, and aspartate 469. Aspartate 325 and aspartate 329 together coordinate Mg(2+). The DDXXD motif signature appears at 325-329 (DDLYD). Residues aspartate 469 and glutamate 477 each coordinate Mg(2+).

The protein belongs to the terpene synthase family. Tpsb subfamily. Monomer. Mg(2+) is required as a cofactor. Requires Mn(2+) as cofactor.

Its subcellular location is the plastid. It localises to the chloroplast. It catalyses the reaction (2E,6E)-farnesyl diphosphate = (+)-delta-selinene + diphosphate. It participates in secondary metabolite biosynthesis; terpenoid biosynthesis. Its pathway is terpene metabolism; oleoresin biosynthesis. Its function is as follows. Sesquiterpene synthase (sesqui-TPS) involved in the biosynthesis of sesquiterpene natural products. Catalyzes the conversion of (2E)-geranyl diphosphate (GPP) into delta-selinene. The polypeptide is Delta-selinene-like synthase, chloroplastic (Picea sitchensis (Sitka spruce)).